We begin with the raw amino-acid sequence, 57 residues long: MFYFRDFNMVVKQEEGSTLFFNMYKYILKKLKRFSLYIFNIIKYVIIFVVYLINKSF.

Its subcellular location is the plastid. This is an uncharacterized protein from Euglena longa (Euglenophycean alga).